Consider the following 106-residue polypeptide: Iron-sulfur cluster assembly protein CyaY (106 aa).

It belongs to the frataxin family.

Functionally, involved in iron-sulfur (Fe-S) cluster assembly. May act as a regulator of Fe-S biogenesis. The protein is Iron-sulfur cluster assembly protein CyaY of Yersinia enterocolitica serotype O:8 / biotype 1B (strain NCTC 13174 / 8081).